We begin with the raw amino-acid sequence, 90 residues long: Small ribosomal subunit protein uS15c (90 aa).

Belongs to the universal ribosomal protein uS15 family. Part of the 30S ribosomal subunit.

The protein localises to the plastid. It localises to the chloroplast. This Populus alba (White poplar) protein is Small ribosomal subunit protein uS15c (rps15).